A 245-amino-acid chain; its full sequence is Biosynthetic peptidoglycan transglycosylase (245 aa).

A helical transmembrane segment spans residues 19–41; the sequence is CLRWVLAAPLLFAAASVLQVLFL.

This sequence belongs to the glycosyltransferase 51 family.

It localises to the cell inner membrane. The catalysed reaction is [GlcNAc-(1-&gt;4)-Mur2Ac(oyl-L-Ala-gamma-D-Glu-L-Lys-D-Ala-D-Ala)](n)-di-trans,octa-cis-undecaprenyl diphosphate + beta-D-GlcNAc-(1-&gt;4)-Mur2Ac(oyl-L-Ala-gamma-D-Glu-L-Lys-D-Ala-D-Ala)-di-trans,octa-cis-undecaprenyl diphosphate = [GlcNAc-(1-&gt;4)-Mur2Ac(oyl-L-Ala-gamma-D-Glu-L-Lys-D-Ala-D-Ala)](n+1)-di-trans,octa-cis-undecaprenyl diphosphate + di-trans,octa-cis-undecaprenyl diphosphate + H(+). It functions in the pathway cell wall biogenesis; peptidoglycan biosynthesis. Peptidoglycan polymerase that catalyzes glycan chain elongation from lipid-linked precursors. In Xanthomonas oryzae pv. oryzae (strain KACC10331 / KXO85), this protein is Biosynthetic peptidoglycan transglycosylase.